The sequence spans 365 residues: Eukaryotic translation initiation factor 3 subunit H (365 aa).

The region spanning 11–160 (VKVDALVVMK…LRAFRLSSKF (150 aa)) is the MPN domain.

It belongs to the eIF-3 subunit H family. As to quaternary structure, component of the eukaryotic translation initiation factor 3 (eIF-3) complex.

The protein resides in the cytoplasm. In terms of biological role, component of the eukaryotic translation initiation factor 3 (eIF-3) complex, which is involved in protein synthesis of a specialized repertoire of mRNAs and, together with other initiation factors, stimulates binding of mRNA and methionyl-tRNAi to the 40S ribosome. The eIF-3 complex specifically targets and initiates translation of a subset of mRNAs involved in cell proliferation. This is Eukaryotic translation initiation factor 3 subunit H from Aspergillus oryzae (strain ATCC 42149 / RIB 40) (Yellow koji mold).